A 372-amino-acid polypeptide reads, in one-letter code: Queuine tRNA-ribosyltransferase (372 aa).

D92 acts as the Proton acceptor in catalysis. Substrate is bound by residues D92–Y96, D146, Q188, and G215. Residues G246–E252 form an RNA binding region. Catalysis depends on D265, which acts as the Nucleophile. Residues T270–R274 form an RNA binding; important for wobble base 34 recognition region. Zn(2+) is bound by residues C303, C305, C308, and H334.

It belongs to the queuine tRNA-ribosyltransferase family. Homodimer. Within each dimer, one monomer is responsible for RNA recognition and catalysis, while the other monomer binds to the replacement base PreQ1. Requires Zn(2+) as cofactor.

It carries out the reaction 7-aminomethyl-7-carbaguanine + guanosine(34) in tRNA = 7-aminomethyl-7-carbaguanosine(34) in tRNA + guanine. It participates in tRNA modification; tRNA-queuosine biosynthesis. In terms of biological role, catalyzes the base-exchange of a guanine (G) residue with the queuine precursor 7-aminomethyl-7-deazaguanine (PreQ1) at position 34 (anticodon wobble position) in tRNAs with GU(N) anticodons (tRNA-Asp, -Asn, -His and -Tyr). Catalysis occurs through a double-displacement mechanism. The nucleophile active site attacks the C1' of nucleotide 34 to detach the guanine base from the RNA, forming a covalent enzyme-RNA intermediate. The proton acceptor active site deprotonates the incoming PreQ1, allowing a nucleophilic attack on the C1' of the ribose to form the product. After dissociation, two additional enzymatic reactions on the tRNA convert PreQ1 to queuine (Q), resulting in the hypermodified nucleoside queuosine (7-(((4,5-cis-dihydroxy-2-cyclopenten-1-yl)amino)methyl)-7-deazaguanosine). This chain is Queuine tRNA-ribosyltransferase, found in Prochlorococcus marinus (strain MIT 9215).